The sequence spans 346 residues: NADH-ubiquinone oxidoreductase chain 2 (346 aa).

The next 11 membrane-spanning stretches (helical) occupy residues 1-21 (MNPH…TITI), 25-45 (HWVL…PLIS), 60-80 (FLTQ…NAWA), 95-115 (CLLL…HFWF), 124-144 (LMTA…LLLM), 149-169 (LNPA…GWMG), 178-195 (ILAF…IILV), 200-219 (LALL…FMAL), 242-262 (ATLM…GFMP), 274-294 (EMTP…FFYL), and 326-346 (AILA…HAIV).

The protein belongs to the complex I subunit 2 family.

Its subcellular location is the mitochondrion inner membrane. The catalysed reaction is a ubiquinone + NADH + 5 H(+)(in) = a ubiquinol + NAD(+) + 4 H(+)(out). Functionally, core subunit of the mitochondrial membrane respiratory chain NADH dehydrogenase (Complex I) that is believed to belong to the minimal assembly required for catalysis. Complex I functions in the transfer of electrons from NADH to the respiratory chain. The immediate electron acceptor for the enzyme is believed to be ubiquinone. The chain is NADH-ubiquinone oxidoreductase chain 2 (MT-ND2) from Mareca americana (American wigeon).